A 544-amino-acid chain; its full sequence is MAKDIKFSEEARRSMLRGVDALADAVKVTLGPKGRNVVLEKKFGSPLITNDGVTIAKEIELEDAFENMGAKLVAEVASKTNDVAGDGTTTATVLAQAMIREGLKNVTAGANPVGVRKGIEQAVAVAVESLKEISKPIEGKESIAQVASISAADEEVGSLIAEAMERVGNDGVITIEESKGFTTELEVVEGMQFDRGYASPYMVTDSDKMEAVLENPYILVTDKKITNIQEILPVLEQVVQQGKPLLLIAEDVEGEALATLVVNKLRGTFNAVAVKAPGFGDRRKAMLEDISILTGAEVITEDLGLDLKSTQINQLGRASKVVVTKENTTIVEGAGDTEQIAARVNQIRAQVEETTSEFDKEKLQERLAKLAGGVAVIKVGAATETELKERKLRIEDALNSTRAAVEEGIVSGGGTALVNVYNKVAALEAEGDELTGINIVLRALEEPIRQIAHNAGLEGSVIVERLKNEEIGVGYNAATGEWVNMIDKGIVDPTKVTRSALQNAASVAAMFLTTEAVVADKPEENKGGAGMPDMGGMGGMGGMM.

ATP contacts are provided by residues 29-32, 86-90, glycine 413, 476-478, and aspartate 492; these read TLGP, DGTTT, and NAA.

It belongs to the chaperonin (HSP60) family. In terms of assembly, forms a cylinder of 14 subunits composed of two heptameric rings stacked back-to-back. Interacts with the co-chaperonin GroES.

The protein resides in the cytoplasm. The catalysed reaction is ATP + H2O + a folded polypeptide = ADP + phosphate + an unfolded polypeptide.. Functionally, together with its co-chaperonin GroES, plays an essential role in assisting protein folding. The GroEL-GroES system forms a nano-cage that allows encapsulation of the non-native substrate proteins and provides a physical environment optimized to promote and accelerate protein folding. The sequence is that of Chaperonin GroEL from Bacillus licheniformis (strain ATCC 14580 / DSM 13 / JCM 2505 / CCUG 7422 / NBRC 12200 / NCIMB 9375 / NCTC 10341 / NRRL NRS-1264 / Gibson 46).